Here is a 510-residue protein sequence, read N- to C-terminus: Glycogen synthase (510 aa).

Position 18 (K18) interacts with ADP-alpha-D-glucose.

The protein belongs to the glycosyltransferase 1 family. Bacterial/plant glycogen synthase subfamily.

The enzyme catalyses [(1-&gt;4)-alpha-D-glucosyl](n) + ADP-alpha-D-glucose = [(1-&gt;4)-alpha-D-glucosyl](n+1) + ADP + H(+). Its pathway is glycan biosynthesis; glycogen biosynthesis. Synthesizes alpha-1,4-glucan chains using ADP-glucose. The chain is Glycogen synthase from Bordetella parapertussis (strain 12822 / ATCC BAA-587 / NCTC 13253).